The sequence spans 119 residues: Beta-2-microglobulin (119 aa).

The first 20 residues, 1–20 (MARFVVVPLLVLLSLFGLEA), serve as a signal peptide directing secretion. One can recognise an Ig-like C1-type domain in the interval 25–114 (PKIQVYSRYP…VTFSTPKTVK (90 aa)). A disulfide bridge connects residues C45 and C100.

This sequence belongs to the beta-2-microglobulin family. In terms of assembly, heterodimer of an alpha chain and a beta chain. Beta-2-microglobulin is the beta-chain of major histocompatibility complex class I molecules.

The protein resides in the secreted. Functionally, component of the class I major histocompatibility complex (MHC). Involved in the presentation of peptide antigens to the immune system. The protein is Beta-2-microglobulin (B2M) of Saguinus bicolor bicolor (Pied bare-faced tamarin).